The primary structure comprises 268 residues: Thiazole synthase (268 aa).

The Schiff-base intermediate with DXP role is filled by K100. 1-deoxy-D-xylulose 5-phosphate-binding positions include G161, 187-188 (AG), and 209-210 (NT). The disordered stretch occupies residues 248-268 (ASPSSPAEGMFTGTQHPAANS). Positions 259–268 (TGTQHPAANS) are enriched in polar residues.

It belongs to the ThiG family. As to quaternary structure, homotetramer. Forms heterodimers with either ThiH or ThiS.

The protein resides in the cytoplasm. It carries out the reaction [ThiS sulfur-carrier protein]-C-terminal-Gly-aminoethanethioate + 2-iminoacetate + 1-deoxy-D-xylulose 5-phosphate = [ThiS sulfur-carrier protein]-C-terminal Gly-Gly + 2-[(2R,5Z)-2-carboxy-4-methylthiazol-5(2H)-ylidene]ethyl phosphate + 2 H2O + H(+). It participates in cofactor biosynthesis; thiamine diphosphate biosynthesis. Its function is as follows. Catalyzes the rearrangement of 1-deoxy-D-xylulose 5-phosphate (DXP) to produce the thiazole phosphate moiety of thiamine. Sulfur is provided by the thiocarboxylate moiety of the carrier protein ThiS. In vitro, sulfur can be provided by H(2)S. The sequence is that of Thiazole synthase from Nitrosomonas europaea (strain ATCC 19718 / CIP 103999 / KCTC 2705 / NBRC 14298).